Consider the following 195-residue polypeptide: dITP/XTP pyrophosphatase (195 aa).

8–13 (SGNAGK) is a substrate binding site. Mg(2+) is bound by residues Glu38 and Asp67. Asp67 (proton acceptor) is an active-site residue. Residues Ser68, 146–149 (FGYD), Lys169, and 174–175 (HR) each bind substrate.

The protein belongs to the HAM1 NTPase family. Homodimer. Mg(2+) serves as cofactor.

It catalyses the reaction XTP + H2O = XMP + diphosphate + H(+). The enzyme catalyses dITP + H2O = dIMP + diphosphate + H(+). The catalysed reaction is ITP + H2O = IMP + diphosphate + H(+). Pyrophosphatase that catalyzes the hydrolysis of nucleoside triphosphates to their monophosphate derivatives, with a high preference for the non-canonical purine nucleotides XTP (xanthosine triphosphate), dITP (deoxyinosine triphosphate) and ITP. Seems to function as a house-cleaning enzyme that removes non-canonical purine nucleotides from the nucleotide pool, thus preventing their incorporation into DNA/RNA and avoiding chromosomal lesions. This Parasynechococcus marenigrum (strain WH8102) protein is dITP/XTP pyrophosphatase.